Here is a 226-residue protein sequence, read N- to C-terminus: PKHD-type hydroxylase Pput_0892 (226 aa).

Residues 78–178 form the Fe2OG dioxygenase domain; sequence KVFPPLINCY…RYAAFFWTQS (101 aa). His96, Asp98, and His159 together coordinate Fe cation. 2-oxoglutarate is bound at residue Arg169.

The cofactor is Fe(2+). L-ascorbate is required as a cofactor.

The sequence is that of PKHD-type hydroxylase Pput_0892 from Pseudomonas putida (strain ATCC 700007 / DSM 6899 / JCM 31910 / BCRC 17059 / LMG 24140 / F1).